A 196-amino-acid polypeptide reads, in one-letter code: uncharacterized protein (196 aa).

Residues 44-46 (TTA), Gly-80, Val-100, and 107-109 (PSL) each bind S-adenosyl-L-methionine.

Belongs to the class IV-like SAM-binding methyltransferase superfamily. RNA methyltransferase TrmH family.

This is an uncharacterized protein from Serratia marcescens.